Reading from the N-terminus, the 328-residue chain is Tryptophan--tRNA ligase (328 aa).

ATP-binding positions include 11–13 (QPT) and 19–20 (GN). A 'HIGH' region motif is present at residues 12–20 (PTGNIHLGN). D135 contacts L-tryptophan. ATP contacts are provided by residues 147–149 (GED), I186, and 195–199 (KMSKS). The short motif at 195–199 (KMSKS) is the 'KMSKS' region element.

Belongs to the class-I aminoacyl-tRNA synthetase family. Homodimer.

The protein resides in the cytoplasm. It catalyses the reaction tRNA(Trp) + L-tryptophan + ATP = L-tryptophyl-tRNA(Trp) + AMP + diphosphate + H(+). Its function is as follows. Catalyzes the attachment of tryptophan to tRNA(Trp). This is Tryptophan--tRNA ligase from Wolinella succinogenes (strain ATCC 29543 / DSM 1740 / CCUG 13145 / JCM 31913 / LMG 7466 / NCTC 11488 / FDC 602W) (Vibrio succinogenes).